A 66-amino-acid polypeptide reads, in one-letter code: Alpha-bisabolene synthase (66 aa).

It belongs to the terpene synthase family. Tpsd subfamily. The cofactor is Mn(2+). It depends on K(+) as a cofactor.

Its subcellular location is the cytoplasm. The enzyme catalyses (2E,6E)-farnesyl diphosphate = (E,R)-alpha-bisabolene + diphosphate. It functions in the pathway terpene metabolism; oleoresin biosynthesis. In terms of biological role, involved in defensive oleoresin formation in conifers in response to insect attack or other injury. Involved in sesquiterpene (C15) olefins biosynthesis. This chain is Alpha-bisabolene synthase, found in Pseudotsuga menziesii (Douglas-fir).